Consider the following 207-residue polypeptide: ConoCAP (207 aa).

The first 21 residues, 1–21, serve as a signal peptide directing secretion; sequence MVSLGHVLFVILLPVLLPVAA. A propeptide spanning residues 22–48 is cleaved from the precursor; it reads DDPDDQMLSQISLPSSSRSEYDDNDVS. Residues Cys-53 and Cys-59 are joined by a disulfide bond. Gly-60 carries the glycine amide modification. The propeptide occupies 63–82; sequence HRDRSRRQERYGKRLIPVLA. Cys-87 and Cys-92 are joined by a disulfide. Residue Asn-94 is modified to Asparagine amide. Positions 98–160 are excised as a propeptide; sequence SLSGAGPALS…RDPAASGDLS (63 aa). The segment at 131–155 is disordered; that stretch reads ARHEQQQQLLQQREQRGLESRDPAA. Residues 143-152 show a composition bias toward basic and acidic residues; sequence REQRGLESRD. A disulfide bridge connects residues Cys-165 and Cys-171. Gly-173 is subject to Glycine amide. Residues 177-207 constitute a propeptide that is removed on maturation; it reads TLYSPWLERMNEVADDRSARNALCTRLGWRE.

As to expression, expressed by the venom duct.

The protein resides in the secreted. In terms of biological role, in contrast to other members of the CCAP family which are cardio-accelerators, conoCAP-a decreases the heart frequency in Drosophila larvae (26%), rats and zebrafish embryos. It also reduces the blood pressure in rats. It decreases systolic calcium in ventricular cardiac myocytes, indicating that it may act via impairment of intracellular calcium trafficking. Synthetic conoCAP-b decreases the heart frequency of 23% in Drosophila larvae. Its function is as follows. Synthetic conoCAP-c decreases the heart frequency of 12% in Drosophila larvae. The protein is ConoCAP (conoCAP) of Conus villepinii (Villepin's cone).